A 100-amino-acid polypeptide reads, in one-letter code: NADH-quinone oxidoreductase subunit K (100 aa).

3 helical membrane-spanning segments follow: residues 4 to 24 (LQHG…CLVL), 28 to 48 (LLFM…AFVV), and 60 to 80 (IMYI…LALL).

It belongs to the complex I subunit 4L family. In terms of assembly, NDH-1 is composed of 13 different subunits. Subunits NuoA, H, J, K, L, M, N constitute the membrane sector of the complex.

It localises to the cell inner membrane. It carries out the reaction a quinone + NADH + 5 H(+)(in) = a quinol + NAD(+) + 4 H(+)(out). In terms of biological role, NDH-1 shuttles electrons from NADH, via FMN and iron-sulfur (Fe-S) centers, to quinones in the respiratory chain. The immediate electron acceptor for the enzyme in this species is believed to be ubiquinone. Couples the redox reaction to proton translocation (for every two electrons transferred, four hydrogen ions are translocated across the cytoplasmic membrane), and thus conserves the redox energy in a proton gradient. The protein is NADH-quinone oxidoreductase subunit K of Proteus mirabilis (strain HI4320).